The following is a 131-amino-acid chain: Small ribosomal subunit protein uS8 (131 aa).

Belongs to the universal ribosomal protein uS8 family. As to quaternary structure, part of the 30S ribosomal subunit. Contacts proteins S5 and S12.

Its function is as follows. One of the primary rRNA binding proteins, it binds directly to 16S rRNA central domain where it helps coordinate assembly of the platform of the 30S subunit. The chain is Small ribosomal subunit protein uS8 from Nitrosomonas europaea (strain ATCC 19718 / CIP 103999 / KCTC 2705 / NBRC 14298).